The following is a 324-amino-acid chain: Protoheme IX farnesyltransferase 2 (324 aa).

Transmembrane regions (helical) follow at residues Leu39–Ala59, Ile63–Ala83, His115–Thr135, Leu137–Val157, Ile166–Gly186, Ala192–Met212, Ile239–Trp259, Leu260–His280, and Leu302–Trp322.

It belongs to the UbiA prenyltransferase family. Protoheme IX farnesyltransferase subfamily.

The protein resides in the cell membrane. The enzyme catalyses heme b + (2E,6E)-farnesyl diphosphate + H2O = Fe(II)-heme o + diphosphate. The protein operates within porphyrin-containing compound metabolism; heme O biosynthesis; heme O from protoheme: step 1/1. Functionally, converts heme B (protoheme IX) to heme O by substitution of the vinyl group on carbon 2 of heme B porphyrin ring with a hydroxyethyl farnesyl side group. The polypeptide is Protoheme IX farnesyltransferase 2 (Saccharopolyspora erythraea (strain ATCC 11635 / DSM 40517 / JCM 4748 / NBRC 13426 / NCIMB 8594 / NRRL 2338)).